The following is a 173-amino-acid chain: Co-chaperone protein HscB homolog (173 aa).

In terms of domain architecture, J spans 2–74 (NYFELFSLSP…ISRAEHMLSL (73 aa)).

It belongs to the HscB family. In terms of assembly, interacts with HscA and stimulates its ATPase activity.

Functionally, co-chaperone involved in the maturation of iron-sulfur cluster-containing proteins. Seems to help targeting proteins to be folded toward HscA. This Shewanella loihica (strain ATCC BAA-1088 / PV-4) protein is Co-chaperone protein HscB homolog.